A 286-amino-acid chain; its full sequence is uncharacterized protein (286 aa).

Positions methionine 1–serine 19 are cleaved as a signal peptide.

This is an uncharacterized protein from Acidianus filamentous virus 2 (isolate Italy/Pozzuoli) (AFV-2).